Reading from the N-terminus, the 210-residue chain is Ribosomal RNA large subunit methyltransferase E (210 aa).

5 residues coordinate S-adenosyl-L-methionine: Gly60, Trp62, Asp80, Asp96, and Asp121. The active-site Proton acceptor is the Lys161.

This sequence belongs to the class I-like SAM-binding methyltransferase superfamily. RNA methyltransferase RlmE family.

The protein resides in the cytoplasm. It carries out the reaction uridine(2552) in 23S rRNA + S-adenosyl-L-methionine = 2'-O-methyluridine(2552) in 23S rRNA + S-adenosyl-L-homocysteine + H(+). Its function is as follows. Specifically methylates the uridine in position 2552 of 23S rRNA at the 2'-O position of the ribose in the fully assembled 50S ribosomal subunit. In Vesicomyosocius okutanii subsp. Calyptogena okutanii (strain HA), this protein is Ribosomal RNA large subunit methyltransferase E.